The primary structure comprises 178 residues: Putative metal-dependent hydrolase GK0616 (178 aa).

Positions 68, 161, and 165 each coordinate Zn(2+).

It belongs to the metal hydrolase YfiT family. As to quaternary structure, homodimer. Zn(2+) serves as cofactor.

It localises to the cytoplasm. Its function is as follows. Possible metal-dependent hydrolase. This is Putative metal-dependent hydrolase GK0616 from Geobacillus kaustophilus (strain HTA426).